The sequence spans 118 residues: UPF0102 protein Swit_0572 (118 aa).

The protein belongs to the UPF0102 family.

The protein is UPF0102 protein Swit_0572 of Rhizorhabdus wittichii (strain DSM 6014 / CCUG 31198 / JCM 15750 / NBRC 105917 / EY 4224 / RW1) (Sphingomonas wittichii).